The chain runs to 149 residues: Arginine repressor (149 aa).

It belongs to the ArgR family.

It localises to the cytoplasm. Its pathway is amino-acid biosynthesis; L-arginine biosynthesis [regulation]. In terms of biological role, regulates arginine biosynthesis genes. In Listeria monocytogenes serotype 4b (strain F2365), this protein is Arginine repressor.